Here is a 628-residue protein sequence, read N- to C-terminus: Alpha-L-arabinofuranosidase A (628 aa).

Residues 1-25 (MVAFSALSGVSAVSLLLSLVQNAHG) form the signal peptide. 10 N-linked (GlcNAc...) asparagine glycosylation sites follow: Asn-36, Asn-51, Asn-74, Asn-152, Asn-171, Asn-260, Asn-359, Asn-440, Asn-493, and Asn-610.

Belongs to the glycosyl hydrolase 51 family.

The catalysed reaction is Hydrolysis of terminal non-reducing alpha-L-arabinofuranoside residues in alpha-L-arabinosides.. It functions in the pathway glycan metabolism; L-arabinan degradation. Its function is as follows. Acts only on small linear 1,5-alpha-linked L-arabinofuranosyl oligosaccharides. This Aspergillus niger protein is Alpha-L-arabinofuranosidase A (abfA).